The sequence spans 447 residues: Ribulose bisphosphate carboxylase large chain (447 aa).

Residues Asn-89 and Thr-139 each coordinate substrate. Catalysis depends on Lys-141, which acts as the Proton acceptor. Lys-143 serves as a coordination point for substrate. Mg(2+) contacts are provided by Lys-167, Asp-169, and Glu-170. Lys-167 is modified (N6-carboxylysine). His-260 functions as the Proton acceptor in the catalytic mechanism. Arg-261, His-293, and Ser-345 together coordinate substrate.

The protein belongs to the RuBisCO large chain family. Type I subfamily. As to quaternary structure, heterohexadecamer of 8 large chains and 8 small chains; disulfide-linked. The disulfide link is formed within the large subunit homodimers. The cofactor is Mg(2+). Post-translationally, the disulfide bond which can form in the large chain dimeric partners within the hexadecamer appears to be associated with oxidative stress and protein turnover.

It localises to the plastid. The protein localises to the chloroplast. It catalyses the reaction 2 (2R)-3-phosphoglycerate + 2 H(+) = D-ribulose 1,5-bisphosphate + CO2 + H2O. The catalysed reaction is D-ribulose 1,5-bisphosphate + O2 = 2-phosphoglycolate + (2R)-3-phosphoglycerate + 2 H(+). Functionally, ruBisCO catalyzes two reactions: the carboxylation of D-ribulose 1,5-bisphosphate, the primary event in carbon dioxide fixation, as well as the oxidative fragmentation of the pentose substrate in the photorespiration process. Both reactions occur simultaneously and in competition at the same active site. The sequence is that of Ribulose bisphosphate carboxylase large chain from Ligustrum vulgare (Common privet).